The primary structure comprises 208 residues: MKGFKIPEATISRLSVYSRYLENLYRKGITTVSSADIAQGVGVTSAQVRKDLAYFGEFGTRGVGYNVKELLDHTLKILGLNNTWNMVVVGAGNLGSALCAYRGFRERGFYIVGVFDNDLTKIGKKINEYEVLPIDKLEEVVRENNVEIGIIAVPAAYAQDVATRLVKAGVKGILNFAPTVLNVPDKVIVRSVDLTVNLEVLTFNIRRD.

Positions V16–F55 form a DNA-binding region, H-T-H motif. G90–G95 is a binding site for NAD(+).

The protein belongs to the transcriptional regulatory Rex family. In terms of assembly, homodimer.

The protein localises to the cytoplasm. Functionally, modulates transcription in response to changes in cellular NADH/NAD(+) redox state. The sequence is that of Redox-sensing transcriptional repressor Rex from Carboxydothermus hydrogenoformans (strain ATCC BAA-161 / DSM 6008 / Z-2901).